We begin with the raw amino-acid sequence, 941 residues long: Isoleucine--tRNA ligase (941 aa).

The 'HIGH' region signature appears at 58–68 (PYANGNIHLGH). E564 contributes to the L-isoleucyl-5'-AMP binding site. The 'KMSKS' region motif lies at 605-609 (KMSKS). K608 lines the ATP pocket. Zn(2+) is bound by residues C904, C907, C924, and C927.

It belongs to the class-I aminoacyl-tRNA synthetase family. IleS type 1 subfamily. In terms of assembly, monomer. Zn(2+) is required as a cofactor.

The protein localises to the cytoplasm. It carries out the reaction tRNA(Ile) + L-isoleucine + ATP = L-isoleucyl-tRNA(Ile) + AMP + diphosphate. In terms of biological role, catalyzes the attachment of isoleucine to tRNA(Ile). As IleRS can inadvertently accommodate and process structurally similar amino acids such as valine, to avoid such errors it has two additional distinct tRNA(Ile)-dependent editing activities. One activity is designated as 'pretransfer' editing and involves the hydrolysis of activated Val-AMP. The other activity is designated 'posttransfer' editing and involves deacylation of mischarged Val-tRNA(Ile). The polypeptide is Isoleucine--tRNA ligase (Hahella chejuensis (strain KCTC 2396)).